The sequence spans 207 residues: Neuroendocrine protein 7B2 (207 aa).

Residues 1–22 form the signal peptide; it reads MVSTMLSGLVLWLTFGWTPALA. Cys116 and Cys125 are joined by a disulfide. Ser136 and Ser200 each carry phosphoserine. A disordered region spans residues 168 to 207; that stretch reads KGGQRRKRRSVNPYLQGQRLDNVVAKKSVPHFSDEDKDPE.

The protein belongs to the 7B2 family. Interacts with PCSK2/PC2 early in the secretory pathway. Dissociation occurs at later stages. In terms of processing, proteolytically cleaved in the Golgi by a furin-like convertase to generate bioactive peptides. Sulfated on tyrosine residues.

Its subcellular location is the secreted. Acts as a molecular chaperone for PCSK2/PC2, preventing its premature activation in the regulated secretory pathway. Binds to inactive PCSK2 in the endoplasmic reticulum and facilitates its transport from there to later compartments of the secretory pathway where it is proteolytically matured and activated. Also required for cleavage of PCSK2 but does not appear to be involved in its folding. Plays a role in regulating pituitary hormone secretion. The C-terminal peptide inhibits PCSK2 in vitro. In Sus scrofa (Pig), this protein is Neuroendocrine protein 7B2 (SCG5).